Consider the following 561-residue polypeptide: Chaperonin GroEL 1 (561 aa).

Residues 29–32 (TMGP), 86–90 (DGTTT), G413, and D495 each bind ATP.

It belongs to the chaperonin (HSP60) family. In terms of assembly, forms a cylinder of 14 subunits composed of two heptameric rings stacked back-to-back. Interacts with the co-chaperonin GroES.

The protein localises to the cytoplasm. The catalysed reaction is ATP + H2O + a folded polypeptide = ADP + phosphate + an unfolded polypeptide.. Together with its co-chaperonin GroES, plays an essential role in assisting protein folding. The GroEL-GroES system forms a nano-cage that allows encapsulation of the non-native substrate proteins and provides a physical environment optimized to promote and accelerate protein folding. The sequence is that of Chaperonin GroEL 1 from Trichodesmium erythraeum (strain IMS101).